A 442-amino-acid chain; its full sequence is D-serine dehydratase (442 aa).

N6-(pyridoxal phosphate)lysine is present on Lys-118.

The protein belongs to the serine/threonine dehydratase family. DsdA subfamily. Monomer. Pyridoxal 5'-phosphate serves as cofactor.

The enzyme catalyses D-serine = pyruvate + NH4(+). The protein is D-serine dehydratase of Citrobacter koseri (strain ATCC BAA-895 / CDC 4225-83 / SGSC4696).